The sequence spans 256 residues: UPF0246 protein TERTU_4575 (256 aa).

Belongs to the UPF0246 family.

In Teredinibacter turnerae (strain ATCC 39867 / T7901), this protein is UPF0246 protein TERTU_4575.